Consider the following 569-residue polypeptide: Myotubularin-related protein 9 (569 aa).

One can recognise a Myotubularin phosphatase domain in the interval 134-513; it reads GWSAFDLEQE…QCIKIWDRLF (380 aa).

This sequence belongs to the protein-tyrosine phosphatase family. Non-receptor class myotubularin subfamily. As to quaternary structure, heterodimer with lipid phosphatase mtm-6.

The protein localises to the cytoplasm. It localises to the membrane. Functionally, may act as a regulatory subunit for mtm-6. In association with phosphatase mtm-6, plays a role in endosome trafficking probably by regulating phosphatidylinositol-3-phosphate levels. Regulates fluid phase endocytosis in coelomocytes. Regulates posterior migration of QL neuroblast descendants and the anterior migration of QR neuroblast descendants and HSN neurons during larval development probably by controlling Wnt ligand secretion through the regulation of sorting receptor mig-14 trafficking. Involved in the formation of correct synapse number in DA9 motor neurons. The protein is Myotubularin-related protein 9 of Caenorhabditis elegans.